Consider the following 391-residue polypeptide: Oxytocin receptor (391 aa).

Topologically, residues 1–38 (MEGAFAANWSAEAVNGSAAPPGTEGNRTAGPPQRNEAL) are extracellular. Asn8, Asn15, and Asn26 each carry an N-linked (GlcNAc...) asparagine glycan. The chain crosses the membrane as a helical span at residues 39-63 (ARVEVAVLCLILFLALSGNACVLLA). Residues 64-74 (LRTTRHKHSRL) are Cytoplasmic-facing. A helical membrane pass occupies residues 75-97 (FFFMKHLSIADLVVAVFQVLPQL). The Extracellular segment spans residues 98–113 (LWDITFRFYGPDLLCR). Cys112 and Cys187 are oxidised to a cystine. A helical transmembrane segment spans residues 114–135 (LVKYLQVVGMFASTYLLLLMSL). Residues 136 to 154 (DRCLAICQPLRSLSRRTDR) are Cytoplasmic-facing. The chain crosses the membrane as a helical span at residues 155–175 (LAVLVTWLGCLVASAPQVHIF). Over 176 to 202 (SLREVADGVFDCWAVFIQPWGPKAYIT) the chain is Extracellular. Residues 203–225 (WITLAVYIVPVIVLATCYGLISF) traverse the membrane as a helical segment. At 226–277 (KIWQNLRLKTAAAAAEAAAGAEGEAADWAGRAILARVSNVKLISKAKIRTVK) the chain is on the cytoplasmic side. The helical transmembrane segment at 278-296 (MTFIVVLAFIVCWTPFFFV) threads the bilayer. Topologically, residues 297 to 311 (QMWSVWDADAPKEAS) are extracellular. The chain crosses the membrane as a helical span at residues 312–334 (PFIIAMLLASLNSCCNPWIYMLF). The Cytoplasmic segment spans residues 335–391 (TGHLFQELVQRFLCCSFRRLKGSRPGETSVSKKSNSSTFVLSQYSSSQRRCSQPSTL). Ser368 and Ser370 each carry phosphoserine.

Belongs to the G-protein coupled receptor 1 family. Vasopressin/oxytocin receptor subfamily.

The protein localises to the cell membrane. Receptor for oxytocin. The activity of this receptor is mediated by G proteins which activate a phosphatidylinositol-calcium second messenger system. This Bos taurus (Bovine) protein is Oxytocin receptor (OXTR).